The sequence spans 230 residues: Large ribosomal subunit protein uL1 (230 aa).

This sequence belongs to the universal ribosomal protein uL1 family. Part of the 50S ribosomal subunit.

Its function is as follows. Binds directly to 23S rRNA. The L1 stalk is quite mobile in the ribosome, and is involved in E site tRNA release. Functionally, protein L1 is also a translational repressor protein, it controls the translation of the L11 operon by binding to its mRNA. The sequence is that of Large ribosomal subunit protein uL1 from Bradyrhizobium diazoefficiens (strain JCM 10833 / BCRC 13528 / IAM 13628 / NBRC 14792 / USDA 110).